Consider the following 115-residue polypeptide: Protein Diedel (115 aa).

The N-terminal stretch at 1–24 is a signal peptide; sequence MASPVVSLLLVGICALAFVHVARS. 5 cysteine pairs are disulfide-bonded: Cys-26–Cys-81, Cys-27–Cys-87, Cys-42–Cys-55, Cys-60–Cys-71, and Cys-76–Cys-83.

Belongs to the Diedel family. In terms of tissue distribution, detected in hemolymph (at protein level). Also expressed in the fat body and is probably synthesized in the fat body and secreted into the hemolymph.

The protein resides in the secreted. Cytokine which promotes survival following infection by Sindbis virus by suppressing the immune deficiency pathway. Following infection by the enteropathogenic bacteria E.carotovora limits intestinal stem cells proliferation. When secreted from muscle or adipose tissue, can attenuate age-related intestinal tissue degeneration by inhibiting apoptosis. This is Protein Diedel from Drosophila melanogaster (Fruit fly).